Here is a 1253-residue protein sequence, read N- to C-terminus: Structural polyprotein (1253 aa).

The host transcription inhibition stretch occupies residues 37–71 (FQAQQMQQLISAVNALTMRQNAIAPARPPKPKKKK). The disordered stretch occupies residues 58 to 109 (AIAPARPPKPKKKKTTKPKPKTQPKKINGKTQQQKKKDKQADKKKKKPGKRE). The Nuclear localization signal motif lies at 64 to 105 (PPKPKKKKTTKPKPKTQPKKINGKTQQQKKKDKQADKKKKKP). Over residues 65 to 107 (PKPKKKKTTKPKPKTQPKKINGKTQQQKKKDKQADKKKKKPGK) the composition is skewed to basic residues. Residues 87 to 120 (KTQQQKKKDKQADKKKKKPGKRERMCMKIENDCI) form a binding to the viral RNA region. The tract at residues 105–119 (PGKRERMCMKIENDC) is ribosome-binding. Residues Cys119 and Cys134 are joined by a disulfide bond. The region spanning 119-267 (CIFEVKHEGK…RVTPEGSEEW (149 aa)) is the Peptidase S3 domain. His145 functions as the Charge relay system in the catalytic mechanism. The short motif at 150–160 (IDNADLAKLAF) is the Nuclear export signal element. The interaction with spike glycoprotein E2 stretch occupies residues 161-166 (KKSSKY). The active-site Charge relay system is the Asp167. Positions 189-199 (PEGHYNWHHGA) are dimerization of the capsid protein. Residue Ser219 is the Charge relay system of the active site. Positions 225–229 (DNKGR) are dimerization of the capsid protein. Over 268 to 701 (SAPLITAMCV…YGLYPAATVS (434 aa)) the chain is Extracellular. Cystine bridges form between Cys276–Cys285, Cys290–Cys294, and Cys293–Cys325. Asn280 carries N-linked (GlcNAc...) asparagine; by host glycosylation. A glycan (N-linked (GlcNAc...) asparagine; by host) is linked at Asn327. 6 disulfides stabilise this stretch: Cys352-Cys458, Cys355-Cys361, Cys424-Cys438, Cys486-Cys598, Cys534-Cys558, and Cys536-Cys553. N-linked (GlcNAc...) asparagine; by host glycosylation is present at Asn533. The N-linked (GlcNAc...) asparagine; by host glycan is linked to Asn595. Residues 702 to 722 (AVVGMSLLALISIFASCYMLV) form a helical membrane-spanning segment. Cys718 carries S-stearoyl cysteine; by host lipidation. An interaction with the capsid protein region spans residues 723–727 (AARSK). At 723–755 (AARSKCLTPYALTPGAAVPWTLGILCCAPRAHA) the chain is on the cytoplasmic side. A lipid anchor (S-stearoyl cysteine; by host) is attached at Cys728. The tract at residues 728–748 (CLTPYALTPGAAVPWTLGILC) is transient transmembrane before p62-6K protein processing. Cys728 and Cys749 are disulfide-bonded. S-palmitoyl cysteine; by host attachment occurs at residues Cys748 and Cys749. The Extracellular segment spans residues 756–770 (ASVAETMAYLWDQNQ). Residues 771 to 791 (ALFWLEFAAPVACILIITYCL) form a helical membrane-spanning segment. Residue Arg792 is a topological domain, cytoplasmic. The helical transmembrane segment at 793 to 813 (NVLCCCKSLSFLVLLSLGATA) threads the bilayer. Over 814–1230 (RAYEHSTVMP…ALSWVQKISG (417 aa)) the chain is Extracellular. 4 disulfides stabilise this stretch: Cys864–Cys929, Cys877–Cys909, Cys878–Cys911, and Cys883–Cys893. The segment at 899 to 916 (VYPFMWGGAYCFCDSENT) is E1 fusion peptide loop. 2 N-linked (GlcNAc...) asparagine; by host glycosylation sites follow: Asn956 and Asn1085. 4 disulfides stabilise this stretch: Cys1074-Cys1086, Cys1116-Cys1191, Cys1121-Cys1195, and Cys1143-Cys1185. The segment at 1112–1192 (IDLTCTVATC…SLCSARATCS (81 aa)) is E1-DIII; interaction with host receptor VLDLR. The helical transmembrane segment at 1231-1251 (GLGAFAIGAILVLVVVTCIGL) threads the bilayer. A lipid anchor (S-stearoyl cysteine; by host) is attached at Cys1248. Residues 1252–1253 (RR) lie on the Cytoplasmic side of the membrane.

As to quaternary structure, homodimer. Homomultimer. Interacts with host karyopherin KPNA4; this interaction allows the nuclear import of the viral capsid protein. Interacts with spike glycoprotein E2. Interacts with host IRAK1; the interaction leads to inhibition of IRAK1-dependent signaling. In terms of assembly, the precursor of protein E3/E2 and E1 form a heterodimer shortly after synthesis. The precursor of protein E3/E2 and E1 form a heterodimer shortly after synthesis. Processing of the precursor of protein E3/E2 into E2 and E3 results in a heterodimer of the spike glycoproteins E2 and E1. Spike at virion surface are constituted of a trimer of E2-E1 heterodimers. E2-E1 heterodimers interact with host VLDLR or LRP8/APOER2 to mediate viral entry. After target cell attachment and endocytosis, E1 change conformation to form homotrimers. Interacts with 6K protein. Interacts (via E1-DIII) with host VLDLR (via class A repeats); this interaction mediates viral entry into host cell. As to quaternary structure, interacts with spike glycoprotein E1. Processing of the precursor of protein E3/E2 into E2 and E3 results in a heterodimer of the spike glycoproteins E2 and E1. Spike at virion surface are constituted of a trimer of E2-E1 heterodimers. E2-E1 heterodimers interact with host VLDLR or LRP8/APOER2 to mediate viral entry. Interacts with 6K protein. In terms of assembly, oligomer. Interacts with spike glycoprotein E1. Interacts with spike glycoprotein E2. Post-translationally, specific enzymatic cleavages in vivo yield mature proteins. Capsid protein is auto-cleaved during polyprotein translation, unmasking a signal peptide at the N-terminus of the precursor of E3/E2. The remaining polyprotein is then targeted to the host endoplasmic reticulum, where host signal peptidase cleaves it into pE2, 6K and E1 proteins. pE2 is further processed to mature E3 and E2 by host furin in trans-Golgi vesicle. Protein processing process takes about 30 minutes at physiologic temperatures. The folding of the p62/6K/E1 precursor requires the formation of intrachain disulfide bonds and has been shown to involve a transient covalent interaction between the nascent and newly synthesized heterodimer and the host-cell chaperones, P4HB/PDI and PDIA3/ERp57. The folding pathway also includes non covalent interaction with human CANX/calnexin and CALR/calreticulin. Palmitoylated via thioester bonds. These palmitoylations may induce disruption of the C-terminus transmembrane. This would result in the reorientation of E2 C-terminus from lumenal to cytoplasmic side. In terms of processing, envelope E1, E2 and E3 proteins are N-glycosylated. Post-translationally, stearoylated. Palmitoylated via thioester bonds with about four covalently bound fatty acids per molecule.

The protein resides in the virion. It is found in the host cytoplasm. Its subcellular location is the host cell membrane. It localises to the host nucleus. The protein localises to the virion membrane. The protein resides in the host Golgi apparatus. It is found in the host trans-Golgi network. Its subcellular location is the host endoplasmic reticulum. The catalysed reaction is Autocatalytic release of the core protein from the N-terminus of the togavirus structural polyprotein by hydrolysis of a -Trp-|-Ser- bond.. Its function is as follows. Forms an icosahedral capsid with a T=4 symmetry composed of 240 copies of the capsid protein surrounded by a lipid membrane through which penetrate 80 spikes composed of trimers of E1-E2 heterodimers. The capsid protein binds to the viral RNA genome at a site adjacent to a ribosome binding site for viral genome translation following genome release. Possesses a protease activity that results in its autocatalytic cleavage from the nascent structural protein. Following its self-cleavage, the capsid protein transiently associates with ribosomes, and within several minutes the protein binds to viral RNA and rapidly assembles into icosahedric core particles. The resulting nucleocapsid eventually associates with the cytoplasmic domain of the spike glycoprotein E2 at the cell membrane, leading to budding and formation of mature virions. In case of infection, new virions attach to target cells and after clathrin-mediated endocytosis their membrane fuses with the host endosomal membrane. This leads to the release of the nucleocapsid into the cytoplasm, followed by an uncoating event necessary for the genomic RNA to become accessible. The uncoating might be triggered by the interaction of capsid proteins with ribosomes. Binding of ribosomes would release the genomic RNA since the same region is genomic RNA-binding and ribosome-binding. Specifically inhibits interleukin-1 receptor-associated kinase 1/IRAK1-dependent signaling during viral entry, representing a means by which the alphaviruses may evade innate immune detection and activation prior to viral gene expression. Functionally, provides the signal sequence for the translocation of the precursor of protein E3/E2 to the host endoplasmic reticulum. Furin-cleaved E3 remains associated with spike glycoprotein E1 and mediates pH protection of the latter during the transport via the secretory pathway. After virion release from the host cell, the assembly protein E3 is gradually released in the extracellular space. Plays a role in viral attachment to target host cell, by binding to the cell receptors VLDLR or LRP8/APOER2. The host LDLR can act as a cell receptor for viral entry. Synthesized as a p62 precursor which is processed by furin at the cell membrane just before virion budding, giving rise to E2-E1 heterodimer. The p62-E1 heterodimer is stable, whereas E2-E1 is unstable and dissociate at low pH. p62 is processed at the last step, presumably to avoid E1 fusion activation before its final export to cell surface. E2 C-terminus contains a transitory transmembrane that would be disrupted by palmitoylation, resulting in reorientation of the C-terminal tail from lumenal to cytoplasmic side. This step is critical since E2 C-terminus is involved in budding by interacting with capsid proteins. This release of E2 C-terminus in cytoplasm occurs lately in protein export, and precludes premature assembly of particles at the endoplasmic reticulum membrane. In terms of biological role, acts as a viroporin that participates in virus glycoprotein processing and transport to the plasma membrane, cell permeabilization and budding of viral particles. Disrupts the calcium homeostasis of the cell, probably at the endoplasmic reticulum level. This leads to cytoplasmic calcium elevation. Because of its lipophilic properties, the 6K protein is postulated to influence the selection of lipids that interact with the transmembrane domains of the glycoproteins, which, in turn, affects the deformability of the bilayer required for the extreme curvature that occurs as budding proceeds. Present in low amount in virions, about 3% compared to viral glycoproteins. Its function is as follows. Class II viral fusion protein. Fusion activity is inactive as long as E1 is bound to E2 in mature virion. After virus attachment to target cell via host VLDLR or LRP8/APOER2 and endocytosis, acidification of the endosome induces dissociation of E1/E2 heterodimer and concomitant trimerization of the E1 subunits. This E1 trimer is fusion active, and promotes release of viral nucleocapsid in cytoplasm after endosome and viral membrane fusion. Efficient fusion requires the presence of cholesterol and sphingolipid in the target membrane. Fusion is optimal at levels of about 1 molecule of cholesterol per 2 molecules of phospholipids, and is specific for sterols containing a 3-beta-hydroxyl group. The sequence is that of Structural polyprotein from Aedes (Middle-African hedgehog).